Consider the following 50-residue polypeptide: KDRPKKPGLCPPRPQKPCVKECKNDDSCPGQQKCCNYGCKDECRDPIFVG.

A WAP domain is found at 3–47; that stretch reads RPKKPGLCPPRPQKPCVKECKNDDSCPGQQKCCNYGCKDECRDPI. Disulfide bonds link Cys10–Cys35, Cys18–Cys39, Cys22–Cys34, and Cys28–Cys43.

Belongs to the venom waprin family. As to expression, expressed by the venom gland.

It is found in the secreted. Functionally, damages membranes of susceptible bacteria. Has antibacterial activity against the Gram-positive bacteria B.megaterium and S.warneri. After a 45-minute treatment with this protein, B.megaterium have no visible pili and are smooth. Has no antibacterial activity against the Gram-positive bacteria B.thuringiensis, S.aureus, S.clavuligerus and B.anthracis, or the Gram-negative bacteria E.coli and A.tumefaciens. Has no hemolytic activity. Does not inhibit the proteinases elastase and cathepsin G. Is not toxic to mice. The polypeptide is Omwaprin-a (Oxyuranus microlepidotus (Inland taipan)).